The chain runs to 180 residues: Ribulose bisphosphate carboxylase small subunit, chloroplastic 1 (180 aa).

The transit peptide at 1–56 (MASSVLSSAAVATRSNVAQANMVAPFTGLKSAASFPVSRKQNLDITSIASNGGRVQ) directs the protein to the chloroplast.

The protein belongs to the RuBisCO small chain family. Heterohexadecamer of 8 large and 8 small subunits.

The protein resides in the plastid. It is found in the chloroplast. In terms of biological role, ruBisCO catalyzes two reactions: the carboxylation of D-ribulose 1,5-bisphosphate, the primary event in carbon dioxide fixation, as well as the oxidative fragmentation of the pentose substrate. Both reactions occur simultaneously and in competition at the same active site. Although the small subunit is not catalytic it is essential for maximal activity. The chain is Ribulose bisphosphate carboxylase small subunit, chloroplastic 1 from Nicotiana sylvestris (Wood tobacco).